A 417-amino-acid chain; its full sequence is Snake venom metalloproteinase acutolysin-C (417 aa).

The first 20 residues, M1–S20, serve as a signal peptide directing secretion. Positions I21–P189 are cleaved as a propeptide — activation peptide. A Peptidase M12B domain is found at T197–S392. 3 disulfides stabilise this stretch: C308/C387, C349/C371, and C351/C354. H333 contributes to the Zn(2+) binding site. The active site involves E334. Positions 337 and 343 each coordinate Zn(2+). A propeptide spanning residues L393–A417 is cleaved from the precursor. The interval V398–A417 is disordered. Residues P407–A417 show a composition bias toward acidic residues.

This sequence belongs to the venom metalloproteinase (M12B) family. P-I subfamily. In terms of assembly, monomer. Zn(2+) serves as cofactor. In terms of tissue distribution, expressed by the venom gland.

It localises to the secreted. This protein is an alkaline zinc metalloprotease from snake venom that possesses weak hemorrhagic activity. The sequence is that of Snake venom metalloproteinase acutolysin-C from Deinagkistrodon acutus (Hundred-pace snake).